Consider the following 218-residue polypeptide: Putative glutamine transport system permease protein GlnP (218 aa).

The region spanning 19–208 (TLVTLKYSVI…ILVMLISFIA (190 aa)) is the ABC transmembrane type-1 domain. 4 consecutive transmembrane segments (helical) span residues 25 to 45 (YSVI…ICKV), 57 to 79 (FYTS…FASP), 86 to 108 (FSVF…SEVI), and 187 to 207 (FFPM…ISFI).

Belongs to the binding-protein-dependent transport system permease family. HisMQ subfamily.

The protein localises to the cell inner membrane. Part of the binding-protein-dependent transport system for glutamine; probably responsible for the translocation of the substrate across the membrane. The polypeptide is Putative glutamine transport system permease protein GlnP (glnP) (Rickettsia felis (strain ATCC VR-1525 / URRWXCal2) (Rickettsia azadi)).